A 235-amino-acid chain; its full sequence is 1-(5-phosphoribosyl)-5-[(5-phosphoribosylamino)methylideneamino] imidazole-4-carboxamide isomerase (235 aa).

D8 (proton acceptor) is an active-site residue. The Proton donor role is filled by D127.

The protein belongs to the HisA/HisF family.

It localises to the cytoplasm. It catalyses the reaction 1-(5-phospho-beta-D-ribosyl)-5-[(5-phospho-beta-D-ribosylamino)methylideneamino]imidazole-4-carboxamide = 5-[(5-phospho-1-deoxy-D-ribulos-1-ylimino)methylamino]-1-(5-phospho-beta-D-ribosyl)imidazole-4-carboxamide. It functions in the pathway amino-acid biosynthesis; L-histidine biosynthesis; L-histidine from 5-phospho-alpha-D-ribose 1-diphosphate: step 4/9. The sequence is that of 1-(5-phosphoribosyl)-5-[(5-phosphoribosylamino)methylideneamino] imidazole-4-carboxamide isomerase from Nautilia profundicola (strain ATCC BAA-1463 / DSM 18972 / AmH).